The following is a 727-amino-acid chain: Prolyl endopeptidase-like (727 aa).

Catalysis depends on charge relay system residues Ser-559, Asp-645, and His-690.

It belongs to the peptidase S9A family. As to quaternary structure, homodimer. Interacts with the AP-1 complex.

The protein resides in the cytoplasm. It is found in the cytosol. It localises to the golgi apparatus. Its subcellular location is the trans-Golgi network. The protein localises to the cytoskeleton. The protein resides in the nucleus. Its function is as follows. Serine peptidase whose precise substrate specificity remains unclear. Does not cleave peptides after a arginine or lysine residue. Regulates trans-Golgi network morphology and sorting by regulating the membrane binding of the AP-1 complex. May play a role in the regulation of synaptic vesicle exocytosis. The polypeptide is Prolyl endopeptidase-like (PREPL) (Macaca fascicularis (Crab-eating macaque)).